Here is a 201-residue protein sequence, read N- to C-terminus: DeSI-like protein sdu1 (201 aa).

Residues 1–143 (MKVYINVYDL…AFPTITNALL (143 aa)) form the PPPDE domain. Catalysis depends on residues H29 and C105. The disordered stretch occupies residues 146 to 201 (GQKNTSDVDDSSDSSSDVDEETLIVSKSKKAHKDIPKFSAPPPSADLNNLITDSLP). Acidic residues predominate over residues 152-167 (DVDDSSDSSSDVDEET). Over residues 191–201 (DLNNLITDSLP) the composition is skewed to polar residues.

This sequence belongs to the DeSI family.

It is found in the cytoplasm. Its function is as follows. Has a role in meiosis. The polypeptide is DeSI-like protein sdu1 (sdu1) (Schizosaccharomyces pombe (strain 972 / ATCC 24843) (Fission yeast)).